The following is a 587-amino-acid chain: 5-aminolevulinate synthase, erythroid-specific, mitochondrial (587 aa).

The N-terminal 49 residues, 1–49 (MVTAAMLLQCCPVLARGPTSLLGKVVKTHQFLFGIGRCPILATQGPNCS), are a transit peptide targeting the mitochondrion. Position 163 (Arg163) interacts with succinyl-CoA. Positions 258 and 259 each coordinate pyridoxal 5'-phosphate. Residues Ser280 and Lys299 each contribute to the succinyl-CoA site. Residues Ser332, His360, and Thr388 each contribute to the pyridoxal 5'-phosphate site. The active site involves Lys391. Lys391 is subject to N6-(pyridoxal phosphate)lysine. Thr420 and Thr421 together coordinate pyridoxal 5'-phosphate. Residue Thr508 participates in succinyl-CoA binding.

The protein belongs to the class-II pyridoxal-phosphate-dependent aminotransferase family. As to quaternary structure, homodimer. Interacts with SUCLA2. In terms of assembly, interacts with SUCLA2. Pyridoxal 5'-phosphate serves as cofactor. As to expression, erythroid-specific.

The protein resides in the mitochondrion inner membrane. It catalyses the reaction succinyl-CoA + glycine + H(+) = 5-aminolevulinate + CO2 + CoA. It functions in the pathway porphyrin-containing compound metabolism; protoporphyrin-IX biosynthesis; 5-aminolevulinate from glycine: step 1/1. With respect to regulation, down-regulated by itaconyl-CoA which acts as a competitive inhibitor of succinyl-CoA substrate. Functionally, catalyzes the pyridoxal 5'-phosphate (PLP)-dependent condensation of succinyl-CoA and glycine to form aminolevulinic acid (ALA), with CoA and CO2 as by-products. Contributes significantly to heme formation during erythropoiesis. Its function is as follows. Catalyzes the pyridoxal 5'-phosphate (PLP)-dependent condensation of succinyl-CoA and glycine to form aminolevulinic acid (ALA), with CoA and CO2 as by-products. Catalytic activity is 75-85% of isoform 1 activity. In terms of biological role, catalyzes the pyridoxal 5'-phosphate (PLP)-dependent condensation of succinyl-CoA and glycine to form aminolevulinic acid (ALA), with CoA and CO2 as by-products. Catalytic activity is 65-75% of isoform 1 activity. This chain is 5-aminolevulinate synthase, erythroid-specific, mitochondrial, found in Homo sapiens (Human).